A 1075-amino-acid chain; its full sequence is DNA-directed RNA polymerase subunit beta (1075 aa).

This sequence belongs to the RNA polymerase beta chain family. In terms of assembly, in plastids the minimal PEP RNA polymerase catalytic core is composed of four subunits: alpha, beta, beta', and beta''. When a (nuclear-encoded) sigma factor is associated with the core the holoenzyme is formed, which can initiate transcription.

It localises to the plastid. The protein localises to the chloroplast. The catalysed reaction is RNA(n) + a ribonucleoside 5'-triphosphate = RNA(n+1) + diphosphate. Its function is as follows. DNA-dependent RNA polymerase catalyzes the transcription of DNA into RNA using the four ribonucleoside triphosphates as substrates. The polypeptide is DNA-directed RNA polymerase subunit beta (Pinus thunbergii (Japanese black pine)).